A 343-amino-acid polypeptide reads, in one-letter code: Dihydroorotase (343 aa).

Zn(2+)-binding residues include His-13 and His-15. Substrate contacts are provided by residues 15-17 (HLR) and Asn-41. 3 residues coordinate Zn(2+): Lys-99, His-136, and His-174. Residue Lys-99 is modified to N6-carboxylysine. His-136 contacts substrate. Substrate is bound at residue Leu-219. Asp-247 is a Zn(2+) binding site. Residue Asp-247 is part of the active site. His-251 and Ala-263 together coordinate substrate.

This sequence belongs to the metallo-dependent hydrolases superfamily. DHOase family. Class II DHOase subfamily. As to quaternary structure, homodimer. It depends on Zn(2+) as a cofactor.

The enzyme catalyses (S)-dihydroorotate + H2O = N-carbamoyl-L-aspartate + H(+). It participates in pyrimidine metabolism; UMP biosynthesis via de novo pathway; (S)-dihydroorotate from bicarbonate: step 3/3. Catalyzes the reversible cyclization of carbamoyl aspartate to dihydroorotate. The chain is Dihydroorotase from Shewanella baltica (strain OS223).